A 204-amino-acid chain; its full sequence is Large ribosomal subunit protein eL15y (204 aa).

The disordered stretch occupies residues 162 to 204 (RGLTSEGKKNRGLRGKGHNNHKNRPSRRATWKKNNSISLRRYR). Residues 171 to 192 (NRGLRGKGHNNHKNRPSRRATW) show a composition bias toward basic residues. Polar residues predominate over residues 193–204 (KKNNSISLRRYR).

The protein belongs to the eukaryotic ribosomal protein eL15 family.

In Arabidopsis thaliana (Mouse-ear cress), this protein is Large ribosomal subunit protein eL15y (RPL15B).